We begin with the raw amino-acid sequence, 217 residues long: Large ribosomal subunit protein eL14 (217 aa).

Position 79 is an N6-acetyllysine (K79). The residue at position 85 (K85) is an N6-acetyllysine; alternate. K85 carries the post-translational modification N6-succinyllysine; alternate. K124 participates in a covalent cross-link: Glycyl lysine isopeptide (Lys-Gly) (interchain with G-Cter in SUMO2). The residue at position 139 (S139) is a Phosphoserine. The tract at residues 162–217 is disordered; that stretch reads KVPAKKATGPGKKAAGQKAPAQKAAGQKAAPPAKGQKGQKTPAQKAPAPKAAGKKA. A 1-1; approximate repeat occupies 173 to 177; that stretch reads KKAAG. The interval 173–192 is 4 X 5 AA tandem repeats of Q-K-A-[APS]-X; the sequence is KKAAGQKAPAQKAAGQKAAP. Repeat copies occupy residues 178 to 182, 183 to 187, 188 to 192, 195 to 197, and 198 to 200. Residues 195–200 form a 2 X 3 AA tandem repeats of K-G-Q region; the sequence is KGQKGQ. K206 carries the post-translational modification N6-succinyllysine.

It belongs to the eukaryotic ribosomal protein eL14 family. Component of the large ribosomal subunit.

The protein resides in the cytoplasm. In terms of biological role, component of the large ribosomal subunit. The ribosome is a large ribonucleoprotein complex responsible for the synthesis of proteins in the cell. The sequence is that of Large ribosomal subunit protein eL14 (Rpl14) from Mus musculus (Mouse).